Reading from the N-terminus, the 224-residue chain is PKHD-type hydroxylase Sbal_3634 (224 aa).

Residues 78 to 176 (QFYPPLFNRY…RTAAFMWLQS (99 aa)) form the Fe2OG dioxygenase domain. Fe cation is bound by residues His-96, Asp-98, and His-157. Residue Arg-167 coordinates 2-oxoglutarate.

The cofactor is Fe(2+). L-ascorbate serves as cofactor.

The polypeptide is PKHD-type hydroxylase Sbal_3634 (Shewanella baltica (strain OS155 / ATCC BAA-1091)).